The chain runs to 451 residues: Chromosomal replication initiator protein DnaA (451 aa).

Positions 1-71 (MSEKEIWDKV…QAIIYDVIGY (71 aa)) are domain I, interacts with DnaA modulators. A domain II region spans residues 71-112 (YEVKPHFISEDELASYNNVNTQEVQEPQVQHSSIDDKTWGKE). The segment at 113–329 (QFNMHNTFDT…GALTRLLAYS (217 aa)) is domain III, AAA+ region. ATP is bound by residues glycine 157, glycine 159, lysine 160, and threonine 161. The segment at 330 to 451 (KLQGKPITTE…ENLEKEIRNQ (122 aa)) is domain IV, binds dsDNA.

It belongs to the DnaA family. As to quaternary structure, oligomerizes as a right-handed, spiral filament on DNA at oriC.

It localises to the cytoplasm. Plays an essential role in the initiation and regulation of chromosomal replication. ATP-DnaA binds to the origin of replication (oriC) to initiate formation of the DNA replication initiation complex once per cell cycle. Binds the DnaA box (a 9 base pair repeat at the origin) and separates the double-stranded (ds)DNA. Forms a right-handed helical filament on oriC DNA; dsDNA binds to the exterior of the filament while single-stranded (ss)DNA is stabiized in the filament's interior. The ATP-DnaA-oriC complex binds and stabilizes one strand of the AT-rich DNA unwinding element (DUE), permitting loading of DNA polymerase. After initiation quickly degrades to an ADP-DnaA complex that is not apt for DNA replication. Binds acidic phospholipids. The chain is Chromosomal replication initiator protein DnaA from Staphylococcus epidermidis (strain ATCC 12228 / FDA PCI 1200).